We begin with the raw amino-acid sequence, 167 residues long: Protein FAM163B (167 aa).

A helical membrane pass occupies residues 6-26 (VVITGGILATVILLCIIAVLC). Residue S40 is modified to Phosphoserine.

It belongs to the FAM163 family.

The protein localises to the membrane. In Mus musculus (Mouse), this protein is Protein FAM163B (Fam163b).